The chain runs to 255 residues: tRNA (guanine-N(1)-)-methyltransferase (255 aa).

S-adenosyl-L-methionine contacts are provided by residues glycine 113 and 133–138 (IGDYVL).

Belongs to the RNA methyltransferase TrmD family. As to quaternary structure, homodimer.

It localises to the cytoplasm. The catalysed reaction is guanosine(37) in tRNA + S-adenosyl-L-methionine = N(1)-methylguanosine(37) in tRNA + S-adenosyl-L-homocysteine + H(+). Its function is as follows. Specifically methylates guanosine-37 in various tRNAs. In Salmonella paratyphi A (strain ATCC 9150 / SARB42), this protein is tRNA (guanine-N(1)-)-methyltransferase.